A 323-amino-acid chain; its full sequence is L-lactate dehydrogenase 1 (323 aa).

Residues Val17, Asp38, Arg43, Tyr68, and 82–83 (GA) contribute to the NAD(+) site. Residues Gln85 and Arg91 each contribute to the substrate site. NAD(+) is bound by residues Ser104, 121–123 (AAN), and Ser146. 123–126 (NPVD) provides a ligand contact to substrate. Substrate is bound at residue 151–154 (DTGR). The Proton acceptor role is filled by His178. Tyr223 bears the Phosphotyrosine mark. Thr232 contacts substrate.

This sequence belongs to the LDH/MDH superfamily. LDH family. In terms of assembly, homotetramer.

It localises to the cytoplasm. It carries out the reaction (S)-lactate + NAD(+) = pyruvate + NADH + H(+). It functions in the pathway fermentation; pyruvate fermentation to lactate; (S)-lactate from pyruvate: step 1/1. Its function is as follows. Catalyzes the conversion of lactate to pyruvate. In Lactobacillus johnsonii (strain CNCM I-12250 / La1 / NCC 533), this protein is L-lactate dehydrogenase 1.